Consider the following 580-residue polypeptide: Methyl-CpG-binding domain protein 4 (580 aa).

The tract at residues M1–K36 is disordered. In terms of domain architecture, MBD spans A76 to K148. A phosphoserine mark is found at S318 and S428. D560 is a catalytic residue.

Interacts with MLH1.

It is found in the nucleus. Mismatch-specific DNA N-glycosylase involved in DNA repair. Has thymine glycosylase activity and is specific for G:T mismatches within methylated and unmethylated CpG sites. Can also remove uracil or 5-fluorouracil in G:U mismatches. Has no lyase activity. Was first identified as methyl-CpG-binding protein. This chain is Methyl-CpG-binding domain protein 4, found in Homo sapiens (Human).